The sequence spans 430 residues: tRNA(Ile)-lysidine synthase (430 aa).

ATP is bound at residue 27 to 32 (SGGSDS).

This sequence belongs to the tRNA(Ile)-lysidine synthase family.

The protein localises to the cytoplasm. The enzyme catalyses cytidine(34) in tRNA(Ile2) + L-lysine + ATP = lysidine(34) in tRNA(Ile2) + AMP + diphosphate + H(+). Ligates lysine onto the cytidine present at position 34 of the AUA codon-specific tRNA(Ile) that contains the anticodon CAU, in an ATP-dependent manner. Cytidine is converted to lysidine, thus changing the amino acid specificity of the tRNA from methionine to isoleucine. The chain is tRNA(Ile)-lysidine synthase from Rickettsia felis (strain ATCC VR-1525 / URRWXCal2) (Rickettsia azadi).